Here is a 494-residue protein sequence, read N- to C-terminus: UPF0371 protein spyM18_1356 (494 aa).

It belongs to the UPF0371 family.

The chain is UPF0371 protein spyM18_1356 from Streptococcus pyogenes serotype M18 (strain MGAS8232).